We begin with the raw amino-acid sequence, 1381 residues long: Serine-aspartate repeat-containing protein D (1381 aa).

An N-terminal signal peptide occupies residues 1-35; that stretch reads MLNRENKTAITRKGMVSNRLNKFSIRKYTVGTASI. A YSIRK-G/S signaling motif motif is present at residues 23–34; the sequence is FSIRKYTVGTAS. Residues 36–568 are ligand binding A region; it reads LVGTTLIFGL…NNQSGGAGQE (533 aa). The segment at 54 to 185 is disordered; the sequence is ESTNKELNEA…NKKVDAKTES (132 aa). Composition is skewed to polar residues over residues 62-71 and 94-108; these read EATTSASDNQ and EMVSSQGNETTSNGN. The span at 130–145 shows a compositional bias: basic and acidic residues; the sequence is KSDEQASPKSTNEDLN. Composition is skewed to polar residues over residues 146 to 155 and 163 to 173; these read TKQTISNQEA and NKSVVNVQPTN. A compositionally biased stretch (basic and acidic residues) spans 174–183; sequence EENKKVDAKT. CNA-B domains are found at residues 569–680, 681–791, 792–901, 902–1012, and 1013–1123; these read VYKI…IYKP, KYNL…YKTP, KYNL…FYKP, TYNL…YKTP, and KYSL…EEET. 3 disordered regions span residues 857 to 883, 972 to 992, and 1078 to 1357; these read ETPSGYTPTQVGSGTDEGIDSNGTSTT, YTPTSVTSGNDTEKDSNGLTT, and EKPA…SNNA. Composition is skewed to polar residues over residues 860-869 and 972-981; these read SGYTPTQVGS and YTPTSVTSGN. Acidic residues-rich tracts occupy residues 1091 to 1101, 1118 to 1134, 1142 to 1164, and 1172 to 1320; these read TEDDKDADGGE, YYEEETSDSDSDSDSDS, SDSDSDSDSDSDSDSDSDSDSDS, and SDSD…DSDS. Residues 1344–1348 carry the LPXTG sorting signal motif; the sequence is LPETG. At Thr1347 the chain carries Pentaglycyl murein peptidoglycan amidated threonine. Residues 1348 to 1381 constitute a propeptide, removed by sortase; sequence GNENSGSNNATLFGGLFAALGSLLLFGRRKKQNK.

The protein belongs to the serine-aspartate repeat-containing protein (SDr) family. As to quaternary structure, interacts with host DSG1; this interaction increases S.aureus adherence to keratinocytes.

The protein resides in the secreted. It is found in the cell wall. In terms of biological role, cell surface-associated calcium-binding protein which plays an important role in adhesion and pathogenesis. Mediates interactions with components of the extracellular matrix such as host DSG1 to promote bacterial adhesion to host cells. Contributes to the resistance to killing by innate immune components such as neutrophils present in blood and thus attenuates bacterial clearance. The chain is Serine-aspartate repeat-containing protein D (sdrD) from Staphylococcus aureus (strain USA300).